A 338-amino-acid chain; its full sequence is Mitochondrial E3 ubiquitin protein ligase 1 (338 aa).

Residues 1 to 3 (MEF) are Cytoplasmic-facing. A helical transmembrane segment spans residues 4–24 (LHESVALGVDLLILGLCAREY). The Mitochondrial intermembrane segment spans residues 25–227 (VHYKRTAKVL…LIKRFEDAKT (203 aa)). A helical membrane pass occupies residues 228-248 (TTILKLVVCSTISAILVAFIA). Residues 249-338 (KKLYRKRKQE…IVSKAAAFIA (90 aa)) are Cytoplasmic-facing. Residues 290 to 326 (CVVCSTNPKEIILLPCGHVCLCEDCAQKISVTCPVCR) form an RING-type zinc finger.

In terms of assembly, interacts with Marf. Post-translationally, auto-ubiquitinated.

The protein localises to the mitochondrion outer membrane. It carries out the reaction S-ubiquitinyl-[E2 ubiquitin-conjugating enzyme]-L-cysteine + [acceptor protein]-L-lysine = [E2 ubiquitin-conjugating enzyme]-L-cysteine + N(6)-ubiquitinyl-[acceptor protein]-L-lysine.. Exhibits weak E3 ubiquitin-protein ligase activity. E3 ubiquitin ligases accept ubiquitin from an E2 ubiquitin-conjugating enzyme in the form of a thioester and then directly transfer the ubiquitin to targeted substrates. Plays a role in the control of mitochondrial morphology by promoting mitochondrial fission. Negatively regulates the mitochondrial fusion protein marf by promoting its ubiquitination, acting in a pathway that is parallel to the park/pink1 regulatory pathway. The chain is Mitochondrial E3 ubiquitin protein ligase 1 from Drosophila melanogaster (Fruit fly).